The sequence spans 511 residues: 2,3-bisphosphoglycerate-independent phosphoglycerate mutase (511 aa).

2 residues coordinate Mn(2+): Asp-14 and Ser-64. Catalysis depends on Ser-64, which acts as the Phosphoserine intermediate. Substrate-binding positions include His-125, 155-156 (RD), Arg-187, Arg-193, 259-262 (RADR), and Lys-333. Positions 400, 404, 441, 442, and 460 each coordinate Mn(2+).

Belongs to the BPG-independent phosphoglycerate mutase family. Monomer. Mn(2+) is required as a cofactor.

The catalysed reaction is (2R)-2-phosphoglycerate = (2R)-3-phosphoglycerate. It participates in carbohydrate degradation; glycolysis; pyruvate from D-glyceraldehyde 3-phosphate: step 3/5. Its function is as follows. Catalyzes the interconversion of 2-phosphoglycerate and 3-phosphoglycerate. This Pseudomonas putida (strain ATCC 47054 / DSM 6125 / CFBP 8728 / NCIMB 11950 / KT2440) protein is 2,3-bisphosphoglycerate-independent phosphoglycerate mutase.